The following is a 478-amino-acid chain: Lactate utilization protein B (478 aa).

4Fe-4S ferredoxin-type domains are found at residues 303–333 (GTEFQSALHCIRCAACINVCPVYRHVGGHAY) and 352–381 (YDDHKELPYASSLCAACTEACPVKIPLHEQ). The [4Fe-4S] cluster site is built by cysteine 312, cysteine 315, cysteine 318, cysteine 322, cysteine 365, cysteine 368, and cysteine 372.

This sequence belongs to the LutB/YkgF family.

Its function is as follows. Is involved in L-lactate degradation and allows cells to grow with lactate as the sole carbon source. Has probably a role as an electron transporter during oxidation of L-lactate. In Oceanobacillus iheyensis (strain DSM 14371 / CIP 107618 / JCM 11309 / KCTC 3954 / HTE831), this protein is Lactate utilization protein B.